We begin with the raw amino-acid sequence, 153 residues long: Fucose mutarotase (153 aa).

The active-site Proton donor is His-24. Residue Asp-32 participates in substrate binding. Asp-69 is a catalytic residue. Substrate is bound by residues Met-78, Tyr-119, Tyr-137, and Asn-139. Tyr-119 is a catalytic residue.

Belongs to the RbsD / FucU family.

It catalyses the reaction alpha-L-fucose = beta-L-fucose. Involved in the interconversion between alpha- and beta-L-fucoses. The chain is Fucose mutarotase (fuom) from Danio rerio (Zebrafish).